We begin with the raw amino-acid sequence, 183 residues long: Ribosome rescue factor SmrB (183 aa).

A Smr domain is found at 98 to 173; the sequence is LDLHGLTQLQ…GDAALLVLIE (76 aa).

It belongs to the SmrB family. As to quaternary structure, associates with collided ribosomes, but not with correctly translating polysomes.

Functionally, acts as a ribosome collision sensor. Detects stalled/collided disomes (pairs of ribosomes where the leading ribosome is stalled and a second ribosome has collided with it) and endonucleolytically cleaves mRNA at the 5' boundary of the stalled ribosome. Stalled/collided disomes form a new interface (primarily via the 30S subunits) that binds SmrB. Cleaved mRNA becomes available for tmRNA ligation, leading to ribosomal subunit dissociation and rescue of stalled ribosomes. The protein is Ribosome rescue factor SmrB of Escherichia fergusonii (strain ATCC 35469 / DSM 13698 / CCUG 18766 / IAM 14443 / JCM 21226 / LMG 7866 / NBRC 102419 / NCTC 12128 / CDC 0568-73).